A 301-amino-acid chain; its full sequence is Immune-associated nucleotide-binding protein 5 (301 aa).

Positions 11–214 constitute an AIG1-type G domain; sequence EPVRNIVLVG…FTEENDLNEK (204 aa). Residues 20–27 are G1; it reads GPTGNGKS. 20-28 is a GTP binding site; the sequence is GPTGNGKSS. The G2 stretch occupies residues 46–50; it reads CKTCK. A G3 region spans residues 63 to 66; the sequence is DTPG. The G4 stretch occupies residues 133–136; that stretch reads TGGD. Residues 172-174 form a G5 region; that stretch reads NNK. GTP is bound at residue N173.

It belongs to the TRAFAC class TrmE-Era-EngA-EngB-Septin-like GTPase superfamily. AIG1/Toc34/Toc159-like paraseptin GTPase family. IAN subfamily. As to expression, expressed in pollen, cotyledons and lateral roots.

This is Immune-associated nucleotide-binding protein 5 from Arabidopsis thaliana (Mouse-ear cress).